The primary structure comprises 83 residues: Cytochrome b559 subunit alpha (83 aa).

Residues 21–35 (VIHSITVPSLFIAGW) traverse the membrane as a helical segment. Heme is bound at residue H23.

This sequence belongs to the PsbE/PsbF family. Heterodimer of an alpha subunit and a beta subunit. PSII is composed of 1 copy each of membrane proteins PsbA, PsbB, PsbC, PsbD, PsbE, PsbF, PsbH, PsbI, PsbJ, PsbK, PsbL, PsbM, PsbT, PsbX, PsbY, PsbZ, Psb30/Ycf12, at least 3 peripheral proteins of the oxygen-evolving complex and a large number of cofactors. It forms dimeric complexes. Heme b is required as a cofactor.

It localises to the plastid. The protein localises to the chloroplast thylakoid membrane. Its function is as follows. This b-type cytochrome is tightly associated with the reaction center of photosystem II (PSII). PSII is a light-driven water:plastoquinone oxidoreductase that uses light energy to abstract electrons from H(2)O, generating O(2) and a proton gradient subsequently used for ATP formation. It consists of a core antenna complex that captures photons, and an electron transfer chain that converts photonic excitation into a charge separation. This chain is Cytochrome b559 subunit alpha, found in Oltmannsiellopsis viridis (Marine flagellate).